Here is a 739-residue protein sequence, read N- to C-terminus: NAD(P)H-quinone oxidoreductase subunit 5, chloroplastic (739 aa).

15 helical membrane passes run 9 to 29 (WVIP…LLLV), 40 to 60 (WAFP…NLSI), 89 to 109 (IDPL…VVLI), 144 to 164 (LIQI…LIGF), 184 to 204 (IGDF…GSFE), 219 to 239 (NGVH…GAVA), 258 to 278 (TPIS…FLVA), 280 to 300 (LLPI…IGVI), 327 to 347 (LGYT…FHLI), 354 to 374 (ALLF…VGYS), 396 to 416 (TTFL…CFWS), 425 to 445 (WLYS…TAFY), 542 to 562 (TMLF…SIGI), 597 to 617 (FFIN…IAFL), and 719 to 739 (LFLY…WSLI).

Belongs to the complex I subunit 5 family. NDH is composed of at least 16 different subunits, 5 of which are encoded in the nucleus.

Its subcellular location is the plastid. It localises to the chloroplast thylakoid membrane. The catalysed reaction is a plastoquinone + NADH + (n+1) H(+)(in) = a plastoquinol + NAD(+) + n H(+)(out). It catalyses the reaction a plastoquinone + NADPH + (n+1) H(+)(in) = a plastoquinol + NADP(+) + n H(+)(out). NDH shuttles electrons from NAD(P)H:plastoquinone, via FMN and iron-sulfur (Fe-S) centers, to quinones in the photosynthetic chain and possibly in a chloroplast respiratory chain. The immediate electron acceptor for the enzyme in this species is believed to be plastoquinone. Couples the redox reaction to proton translocation, and thus conserves the redox energy in a proton gradient. This Chloranthus spicatus (Chulantree) protein is NAD(P)H-quinone oxidoreductase subunit 5, chloroplastic (ndhF).